The sequence spans 648 residues: Protein KASH5 (648 aa).

Residues 1 to 606 (MHSILRSSLS…HSPGIRISQH (606 aa)) lie on the Cytoplasmic side of the membrane. Residues 206–228 (PEAEESANLESFGGEDPRPEGPA) form a disordered region. A coiled-coil region spans residues 230–420 (AELLSNLEDL…EEQLSQSQEG (191 aa)). Positions 473 to 497 (EVEPEPEPEPEPEPEPEPQEVEFPS) are enriched in acidic residues. Residues 473–545 (EVEPEPEPEP…EESWVLADPS (73 aa)) are disordered. A helical; Anchor for type IV membrane protein membrane pass occupies residues 607 to 627 (PLVPTPVLGLLLLLLLSILLF). Residues 628–648 (SQSPPPTWPHLQLYYLQPPPV) are Perinuclear space-facing.

As to quaternary structure, core component the LINC complex which is composed of inner nuclear membrane SUN domain-containing proteins coupled to outer nuclear membrane KASH domain-containing nesprins. SUN and KASH domain-containing proteins seem to bind each other promiscuously; however, differentially expression of LINC complex constituents is giving rise to specific assemblies. At least SUN1/2-containing core LINC complexes are proposed to be hexameric composed of three protomers of each KASH and SUN domain-containing protein. Interacts with SUN1; this interaction mediates its telomere localization by forming a SUN1:KASH5 LINC complex. Component of a probable SUN2:KASH5 LINC complex. Self-associates. Interacts with DYNC1H1, DCTN1, DYNC1I1/2 and PAFAH1B1; suggesting the association with the dynein-dynactin motor complex. In terms of tissue distribution, restricted to the testis and the early ootidogenesis ovary. Expressed in spermatocytes and oocytes (at protein level).

The protein resides in the nucleus outer membrane. Its subcellular location is the nucleus. It localises to the chromosome. The protein localises to the telomere. It is found in the nucleus envelope. In terms of biological role, as a component of the LINC (LInker of Nucleoskeleton and Cytoskeleton) complex, involved in the connection between the nuclear lamina and the cytoskeleton. The nucleocytoplasmic interactions established by the LINC complex play an important role in the transmission of mechanical forces across the nuclear envelope and in nuclear movement and positioning. Required for telomere attachment to nuclear envelope in the prophase of meiosis and for rapid telomere prophase movements implicating a SUN1/2:KASH5 LINC complex in which SUN1 and SUN2 seem to act at least partial redundantly. Required for homolog pairing during meiotic prophase in spermatocytes and probably oocytes. Essential for male and female gametogenesis. Recruits cytoplasmic dynein to telomere attachment sites at the nuclear envelope in spermatocytes. In oocytes is involved in meiotic resumption and spindle formation. The protein is Protein KASH5 of Mus musculus (Mouse).